Reading from the N-terminus, the 77-residue chain is uncharacterized protein (77 aa).

In terms of domain architecture, Peptidase A1 spans 1–77 (MAFERQGKIE…VAILDGKLVW (77 aa)).

This is an uncharacterized protein from Saccharomyces cerevisiae (strain ATCC 204508 / S288c) (Baker's yeast).